Reading from the N-terminus, the 330-residue chain is Daunorubicin/doxorubicin resistance ATP-binding protein DrrA (330 aa).

Positions 9–239 (IETSGLVKVY…LGSNVLRLRL (231 aa)) constitute an ABC transporter domain. Residue 41–48 (GPNGAGKS) participates in ATP binding.

Belongs to the ABC transporter superfamily. Drug exporter-1 (DrugE1) (TC 3.A.1.105) family. In terms of assembly, the complex is composed of two ATP-binding proteins (DrrA) and two transmembrane proteins (DrrB).

The protein resides in the cell membrane. It catalyses the reaction daunorubicin(in) + ATP + H2O = daunorubicin(out) + ADP + phosphate + H(+). Functionally, part of the ABC transporter complex DrrAB involved in daunorubicin and doxorubicin resistance. Responsible for energy coupling to the transport system. Binds ATP or GTP. This chain is Daunorubicin/doxorubicin resistance ATP-binding protein DrrA (drrA), found in Streptomyces peucetius.